Here is a 195-residue protein sequence, read N- to C-terminus: U8 snoRNA-decapping enzyme (195 aa).

Residues 18-173 (GWRHACHALL…IGSAREQLLE (156 aa)) enclose the Nudix hydrolase domain. Substrate is bound by residues His-24, Arg-50, and Phe-57. Mn(2+) is bound by residues Gly-59, Glu-76, Glu-80, and His-99. The short motif at 61-82 (FVDTQDRSLEDGLNRELREELG) is the Nudix box element. Gln-170 is a binding site for substrate. Glu-173 is a Mn(2+) binding site.

It belongs to the Nudix hydrolase family. NUDT16 subfamily. Homodimer. It depends on Mg(2+) as a cofactor. Mn(2+) is required as a cofactor. Requires Co(2+) as cofactor. As to expression, expressed strongly in lung, kidney, adrenal gland, testis, heart and brain.

The protein localises to the nucleus. Its subcellular location is the nucleoplasm. It localises to the nucleolus. The protein resides in the cytoplasm. It carries out the reaction a 5'-end (N(7)-methyl 5'-triphosphoguanosine)-ribonucleoside in mRNA + H2O = N(7)-methyl-GDP + a 5'-end phospho-ribonucleoside in mRNA + 2 H(+). The catalysed reaction is IDP + H2O = IMP + phosphate + H(+). The enzyme catalyses dIDP + H2O = dIMP + phosphate + H(+). It catalyses the reaction a 5'-end NAD(+)-phospho-ribonucleoside in mRNA + H2O = a 5'-end phospho-adenosine-phospho-ribonucleoside in mRNA + beta-nicotinamide D-ribonucleotide + 2 H(+). It carries out the reaction a 5'-end FAD-phospho-ribonucleoside in mRNA + H2O = a 5'-end phospho-adenosine-phospho-ribonucleoside in mRNA + FMN + 2 H(+). The catalysed reaction is a 5'-end CoA-ribonucleoside in mRNA + H2O = a 5'-end phospho-adenosine-phospho-ribonucleoside in mRNA + (R)-4'-phosphopantetheine + 2 H(+). With respect to regulation, the phosphatase activity is inhibited by the product IMP. In terms of biological role, RNA-binding and decapping enzyme that catalyzes the cleavage of the cap structure of snoRNAs and mRNAs in a metal-dependent manner. Part of the U8 snoRNP complex that is required for the accumulation of mature 5.8S and 28S rRNA. Has diphosphatase activity and removes m7G and/or m227G caps from U8 snoRNA and leaves a 5'monophosphate on the RNA. Also catalyzes the cleavage of the cap structure on mRNAs. Does not hydrolyze cap analog structures like 7-methylguanosine nucleoside triphosphate (m7GpppG). Also hydrolysis m7G- and m227G U3-capped RNAs but with less efficiencies. Has broad substrate specificity with manganese or cobalt as cofactor and can act on various RNA species. Binds to the U8 snoRNA; metal is not required for RNA-binding. May play a role in the regulation of snoRNAs and mRNAs degradation. Also acts as a phosphatase; hydrolyzes the non-canonical purine nucleotides inosine diphosphate (IDP) and deoxyinosine diphosphate (dITP) as well as guanosine diphosphate (GDP), deoxyguanosine diphosphate (dGDP), xanthine diphosphate (XDP), inosine triphosphate (ITP) and deoxyinosine triphosphate (ITP) to their respective monophosphate derivatives and does not distinguish between the deoxy- and ribose forms. The order of activity with different substrates is IDP &gt; dIDP &gt;&gt; GDP = dGDP &gt; XDP = ITP = dITP. Binds strongly to GTP, ITP and XTP. Participates in the hydrolysis of dIDP/IDP and probably excludes non-canonical purines from RNA and DNA precursor pools, thus preventing their incorporation into RNA and DNA and avoiding chromosomal lesions. Exhibits decapping activity towards NAD-capped RNAs and FAD-capped RNAs. Exhibits decapping activity towards dpCoA-capped RNAs in vitro. The protein is U8 snoRNA-decapping enzyme (NUDT16) of Homo sapiens (Human).